The following is a 389-amino-acid chain: Histidinol-phosphate aminotransferase (389 aa).

An N6-(pyridoxal phosphate)lysine modification is found at K233.

This sequence belongs to the class-II pyridoxal-phosphate-dependent aminotransferase family. Requires pyridoxal 5'-phosphate as cofactor.

It carries out the reaction L-histidinol phosphate + 2-oxoglutarate = 3-(imidazol-4-yl)-2-oxopropyl phosphate + L-glutamate. The protein operates within amino-acid biosynthesis; L-histidine biosynthesis; L-histidine from 5-phospho-alpha-D-ribose 1-diphosphate: step 7/9. The sequence is that of Histidinol-phosphate aminotransferase (HIS5) from Candida maltosa (Yeast).